Reading from the N-terminus, the 193-residue chain is Dirigent protein 11 (193 aa).

Positions 1 to 33 (MLQITNMATPFLLLLLPLIFSTVLLLTITVTQS) are cleaved as a signal peptide. N78 and N136 each carry an N-linked (GlcNAc...) asparagine glycan.

This sequence belongs to the plant dirigent protein family. In terms of assembly, homodimer.

It localises to the secreted. It is found in the extracellular space. The protein localises to the apoplast. Functionally, dirigent proteins impart stereoselectivity on the phenoxy radical-coupling reaction, yielding optically active lignans from two molecules of coniferyl alcohol in the biosynthesis of lignans, flavonolignans, and alkaloids and thus plays a central role in plant secondary metabolism. This chain is Dirigent protein 11 (DIR11), found in Arabidopsis thaliana (Mouse-ear cress).